A 101-amino-acid chain; its full sequence is MFVKKGDKVRVIAGKDKGTEAVVLKALPKVNKVVVEGVALIKKHQKPNNENPQGAIVEKEAPIHVSNVQVLDKNGVAGRVGYKVVDGKKVRYNKKSGEVLD.

Belongs to the universal ribosomal protein uL24 family. As to quaternary structure, part of the 50S ribosomal subunit.

Its function is as follows. One of two assembly initiator proteins, it binds directly to the 5'-end of the 23S rRNA, where it nucleates assembly of the 50S subunit. One of the proteins that surrounds the polypeptide exit tunnel on the outside of the subunit. This is Large ribosomal subunit protein uL24 from Streptococcus agalactiae serotype III (strain NEM316).